The chain runs to 711 residues: MND1-interacting protein 1 (711 aa).

Residues 390–648 (EWAQKNAMQA…LEGSYDNEAN (259 aa)) are a coiled coil. Disordered regions lie at residues 552-571 (EALAQMEEEQRSKEAAEGHN) and 602-622 (RLKASSDSDSSHISNNAWKPK). The segment covering 602–611 (RLKASSDSDS) has biased composition (basic and acidic residues). Residues 653 to 697 (CIICMKDEVSVVFLPCAHQVVCGSCSDSFFASNNGGSKVTCPCCR) form an RING-type zinc finger.

As to quaternary structure, interacts (via C-terminal domain) with MND1 and HOP2. Interacts with XRI1 (via C-terminal domain).

The polypeptide is MND1-interacting protein 1 (MIP1) (Arabidopsis thaliana (Mouse-ear cress)).